Here is a 377-residue protein sequence, read N- to C-terminus: Nitric oxide reductase FlRd-NAD(+) reductase (377 aa).

The protein belongs to the FAD-dependent oxidoreductase family. It depends on FAD as a cofactor.

The protein localises to the cytoplasm. It catalyses the reaction 2 reduced [nitric oxide reductase rubredoxin domain] + NAD(+) + H(+) = 2 oxidized [nitric oxide reductase rubredoxin domain] + NADH. Its pathway is nitrogen metabolism; nitric oxide reduction. Its function is as follows. One of at least two accessory proteins for anaerobic nitric oxide (NO) reductase. Reduces the rubredoxin moiety of NO reductase. The polypeptide is Nitric oxide reductase FlRd-NAD(+) reductase (Salmonella paratyphi B (strain ATCC BAA-1250 / SPB7)).